Here is a 214-residue protein sequence, read N- to C-terminus: Probable nicotinate-nucleotide adenylyltransferase (214 aa).

The protein belongs to the NadD family.

It catalyses the reaction nicotinate beta-D-ribonucleotide + ATP + H(+) = deamido-NAD(+) + diphosphate. The protein operates within cofactor biosynthesis; NAD(+) biosynthesis; deamido-NAD(+) from nicotinate D-ribonucleotide: step 1/1. Functionally, catalyzes the reversible adenylation of nicotinate mononucleotide (NaMN) to nicotinic acid adenine dinucleotide (NaAD). The protein is Probable nicotinate-nucleotide adenylyltransferase of Mycobacterium bovis (strain ATCC BAA-935 / AF2122/97).